A 101-amino-acid chain; its full sequence is Small ribosomal subunit protein uS14 (101 aa).

It belongs to the universal ribosomal protein uS14 family. In terms of assembly, part of the 30S ribosomal subunit. Contacts proteins S3 and S10.

Binds 16S rRNA, required for the assembly of 30S particles and may also be responsible for determining the conformation of the 16S rRNA at the A site. This Bartonella quintana (strain Toulouse) (Rochalimaea quintana) protein is Small ribosomal subunit protein uS14.